A 170-amino-acid chain; its full sequence is Lipoprotein signal peptidase (170 aa).

The next 3 membrane-spanning stretches (helical) occupy residues 12-32 (WYWV…WVLS), 67-87 (WQRW…SVWL), and 94-116 (MWRL…IDRL). Active-site residues include D123 and D141. Residues 133-153 (HFPAFNIADSAICVGAALIIL) form a helical membrane-spanning segment.

The protein belongs to the peptidase A8 family.

Its subcellular location is the cell inner membrane. The enzyme catalyses Release of signal peptides from bacterial membrane prolipoproteins. Hydrolyzes -Xaa-Yaa-Zaa-|-(S,diacylglyceryl)Cys-, in which Xaa is hydrophobic (preferably Leu), and Yaa (Ala or Ser) and Zaa (Gly or Ala) have small, neutral side chains.. The protein operates within protein modification; lipoprotein biosynthesis (signal peptide cleavage). This protein specifically catalyzes the removal of signal peptides from prolipoproteins. The chain is Lipoprotein signal peptidase from Shewanella halifaxensis (strain HAW-EB4).